A 170-amino-acid chain; its full sequence is Inducible metalloproteinase inhibitor protein (170 aa).

The N-terminal stretch at Met1–Ser19 is a signal peptide. 2 N-linked (GlcNAc...) asparagine glycosylation sites follow: Asn48 and Asn149.

In terms of processing, cleaved. Five disulfide bonds are present. When artificially cleaved by thermolysin between Asn-56 and Ile-57, the two obtained chains (called heavy and light chains) remain linked. Post-translationally, the N-terminus is blocked.

In terms of biological role, inhibits thermolysin, bacillolysin and pseudolysin, B.polymyxa metalloprotease and human MMP1 and MMP3. No activity on trypsin or cysteine protease papain. The polypeptide is Inducible metalloproteinase inhibitor protein (IMPI) (Galleria mellonella (Greater wax moth)).